The primary structure comprises 469 residues: Probable ribonuclease FAU-1 (469 aa).

This sequence belongs to the FAU-1 family.

Its function is as follows. Probable RNase involved in rRNA stability through maturation and/or degradation of precursor rRNAs. Binds to RNA in loop regions with AU-rich sequences. The chain is Probable ribonuclease FAU-1 from Pyrococcus abyssi (strain GE5 / Orsay).